The following is a 376-amino-acid chain: MPADMKTTAPGSDARSSGERDKALNLVLGQIERNFGKGSIMRLGDASRMRVETISTGALTLDLALGGGYPKGRVVEIYGPESSGKTTLTLHAIAEVQKRGGVAAFVDAEHALDPHYAASLGVDVENLLVSQPDTGEMALEIVDQLVRSAAVDIVVIDSVAALTPRSEIEGEMGDVSVGAQARLMSQAMRKITGNIGKSGCTVIFLNQLRLKIGVMYGNPETTTGGNALKFYASVRLDIRRIQTLKKGTEEFGIRAKVKVAKNKVAPPFRIAEFDILFGRGISTVGCLLDLAEETGVVVRKGAWYSYEGDNIGQGRDNTIVWMEQNPEAATTIETLVRQKLNEGTEVTANTVKSLEPAAARAATDKPVETKGANAAA.

79–86 lines the ATP pocket; that stretch reads GPESSGKT. The tract at residues 357 to 376 is disordered; that stretch reads AAARAATDKPVETKGANAAA.

It belongs to the RecA family.

The protein resides in the cytoplasm. Functionally, can catalyze the hydrolysis of ATP in the presence of single-stranded DNA, the ATP-dependent uptake of single-stranded DNA by duplex DNA, and the ATP-dependent hybridization of homologous single-stranded DNAs. It interacts with LexA causing its activation and leading to its autocatalytic cleavage. The protein is Protein RecA of Synechococcus sp. (strain CC9902).